A 707-amino-acid polypeptide reads, in one-letter code: Zinc finger CCHC domain-containing protein 8 (707 aa).

A2 carries the N-acetylalanine modification. The segment at 16 to 44 (FDHPEESIPKPVHTRFKDDDGDEEDENGV) is disordered. The segment covering 34–43 (DDGDEEDENG) has biased composition (acidic residues). Positions 45–80 (GDAELRERLRQCEETIEQLRAENQELKRKLNILTRP) form a coiled coil. The segment at 227-244 (PHCFNCGSEEHQMKDCPM) adopts a CCHC-type zinc-finger fold. RBM7 binding regions lie at residues 286–299 (FKPG…QDAL) and 309–324 (FIYR…GWLK). Residue T342 is modified to Phosphothreonine. Disordered stretches follow at residues 409 to 518 (APGV…LTLE), 531 to 607 (LEQA…TSLC), and 641 to 660 (QKLF…HSPI). K413 is covalently cross-linked (Glycyl lysine isopeptide (Lys-Gly) (interchain with G-Cter in SUMO2)). Residues 456-465 (SQSSESFQFQ) show a composition bias toward low complexity. The segment covering 466 to 496 (PPLPPDTPPLPRGTPPPVFTPPLPKGTPPLT) has biased composition (pro residues). 3 positions are modified to phosphothreonine: T472, T479, and T485. A Phosphothreonine; by GSK3 modification is found at T492. Residues 516–539 (TLEELEEQQRRIWAALEQAESVNS) are a coiled coil. Polar residues predominate over residues 549–559 (LTGNSVASSPC). Phosphothreonine is present on T577. A Phosphoserine modification is found at S598. The segment covering 598–607 (SPDSEVTSLC) has biased composition (polar residues). The residue at position 648 (T648) is a Phosphothreonine. Residues S649, S658, and S695 each carry the phosphoserine modification. An MTREX binding region spans residues 659 to 707 (PIPDMSKFATGITPFEFENMAESTGMYLRIRSLLKNSPRNQQKNKKASE).

Belongs to the ZCCHC8 family. Component of a nuclear TRAMP-like complex, an ATP-dependent exosome regulatory complex consisting of a helicase (MTREX), an oligadenylate polymerase (TENT4B or TENT4A), and a substrate specific RNA-binding factor (ZCCHC7 or ZCCHC8). Several TRAMP-like complexes exist with specific compositions and are associated with nuclear, or nucleolar RNA exosomes. Identified in the spliceosome C complex. Component of the nuclear exosome targeting (NEXT) complex composed of MTREX, ZCCHC8, and RBM7 that directs a subset of non-coding short-lived RNAs for exosomal degradation. Interacts with proteins involved in RNA processing and degradation such as MTREX and RBM7; interaction with MTREX enhances MTREX RNA helicase activity and bridges between RBM7 and MTREX. Interacts with TERC, the telomerase RNA component. Post-translationally, phosphorylation at Thr-492 by GSK3 is triggered in cells entering mitosis; this phosphorylation is greatly enhanced by nocodazole treatment, but reduced by lithium.

Its subcellular location is the nucleus. It localises to the nucleoplasm. Scaffolding subunit of the trimeric nuclear exosome targeting (NEXT) complex that is involved in the surveillance and turnover of aberrant transcripts and non-coding RNAs. NEXT functions as an RNA exosome cofactor that directs a subset of non-coding short-lived RNAs for exosomal degradation. May be involved in pre-mRNA splicing. It is required for 3'-end maturation of telomerase RNA component (TERC), TERC 3'-end targeting to the nuclear RNA exosome, and for telomerase function. The sequence is that of Zinc finger CCHC domain-containing protein 8 (ZCCHC8) from Homo sapiens (Human).